We begin with the raw amino-acid sequence, 254 residues long: Phycobilisome rod-core linker polypeptide CpcG3 (254 aa).

The PBS-linker domain maps to Ser-11–Lys-191.

Belongs to the phycobilisome linker protein family. In terms of assembly, the phycobilisome is a hemidiscoidal structure that is composed of two distinct substructures: a core complex and a number of rods radiating from the core.

It localises to the cellular thylakoid membrane. In terms of biological role, rod-core linker protein required for attachment of phycocyanin to allophycocyanin in cores of phycobilisomes. Its function is as follows. Linker polypeptides determine the state of aggregation and the location of the disk-shaped phycobiliprotein units within the phycobilisome and modulate their spectroscopic properties in order to mediate a directed and optimal energy transfer. This chain is Phycobilisome rod-core linker polypeptide CpcG3 (cpcG3), found in Mastigocladus laminosus (Fischerella sp.).